The sequence spans 204 residues: LexA repressor (204 aa).

Positions 27 to 47 (VREIGEAVGLASSSTVHGHLA) form a DNA-binding region, H-T-H motif. Residues Ser-126 and Lys-164 each act as for autocatalytic cleavage activity in the active site.

Belongs to the peptidase S24 family. Homodimer.

It catalyses the reaction Hydrolysis of Ala-|-Gly bond in repressor LexA.. Its function is as follows. Represses a number of genes involved in the response to DNA damage (SOS response), including recA and lexA. In the presence of single-stranded DNA, RecA interacts with LexA causing an autocatalytic cleavage which disrupts the DNA-binding part of LexA, leading to derepression of the SOS regulon and eventually DNA repair. The protein is LexA repressor of Listeria innocua serovar 6a (strain ATCC BAA-680 / CLIP 11262).